A 195-amino-acid chain; its full sequence is SXP/RAL-2-like protein 2 (195 aa).

Positions 162–195 (EKVHGGSHGGLRGGPGGPRDGPRGGPRGGPRGGR) are disordered. Over residues 167 to 195 (GSHGGLRGGPGGPRDGPRGGPRGGPRGGR) the composition is skewed to gly residues.

It belongs to the SXP/RAL-2 family.

The chain is SXP/RAL-2-like protein 2 from Caenorhabditis elegans.